A 155-amino-acid polypeptide reads, in one-letter code: Small ribosomal subunit protein uS7 (155 aa).

Belongs to the universal ribosomal protein uS7 family. As to quaternary structure, part of the 30S ribosomal subunit. Contacts proteins S9 and S11.

In terms of biological role, one of the primary rRNA binding proteins, it binds directly to 16S rRNA where it nucleates assembly of the head domain of the 30S subunit. Is located at the subunit interface close to the decoding center, probably blocks exit of the E-site tRNA. In Chlorobium phaeobacteroides (strain BS1), this protein is Small ribosomal subunit protein uS7.